We begin with the raw amino-acid sequence, 399 residues long: DNA polymerase IV (399 aa).

The region spanning 5-187 (ILHCDLNNFY…LPVEALLYVG (183 aa)) is the UmuC domain. Residues D9 and D105 each contribute to the Mg(2+) site. The active site involves E106.

It belongs to the DNA polymerase type-Y family. In terms of assembly, monomer. The cofactor is Mg(2+).

Its subcellular location is the cytoplasm. It catalyses the reaction DNA(n) + a 2'-deoxyribonucleoside 5'-triphosphate = DNA(n+1) + diphosphate. In terms of biological role, poorly processive, error-prone DNA polymerase involved in untargeted mutagenesis. Copies undamaged DNA at stalled replication forks, which arise in vivo from mismatched or misaligned primer ends. These misaligned primers can be extended by PolIV. Exhibits no 3'-5' exonuclease (proofreading) activity. May be involved in translesional synthesis, in conjunction with the beta clamp from PolIII. The sequence is that of DNA polymerase IV from Acetivibrio thermocellus (strain ATCC 27405 / DSM 1237 / JCM 9322 / NBRC 103400 / NCIMB 10682 / NRRL B-4536 / VPI 7372) (Clostridium thermocellum).